Reading from the N-terminus, the 250-residue chain is ATP synthase subunit a (250 aa).

6 consecutive transmembrane segments (helical) span residues 29–49 (ASLFMAASAAVAVGFLYFATS), 84–104 (FFPLVFSLFMFVLTANLLGMF), 114–134 (IIVTFALAILVIGTVLVYGFY), 143–163 (VFVPSGVPGILLPLVVAIEII), 193–213 (FVASLGALGAVGVGGAVLPLI), and 216–236 (VALTGLEFLVAFLQAYVFAVL).

This sequence belongs to the ATPase A chain family. F-type ATPases have 2 components, CF(1) - the catalytic core - and CF(0) - the membrane proton channel. CF(1) has five subunits: alpha(3), beta(3), gamma(1), delta(1), epsilon(1). CF(0) has three main subunits: a(1), b(2) and c(9-12). The alpha and beta chains form an alternating ring which encloses part of the gamma chain. CF(1) is attached to CF(0) by a central stalk formed by the gamma and epsilon chains, while a peripheral stalk is formed by the delta and b chains.

It localises to the cell inner membrane. Functionally, key component of the proton channel; it plays a direct role in the translocation of protons across the membrane. The chain is ATP synthase subunit a from Rhizobium etli (strain CIAT 652).